A 114-amino-acid chain; its full sequence is Hydrogenase maturation factor HypA (114 aa).

Residue histidine 2 participates in Ni(2+) binding. Positions 73, 76, 89, and 92 each coordinate Zn(2+).

It belongs to the HypA/HybF family.

In terms of biological role, involved in the maturation of [NiFe] hydrogenases. Required for nickel insertion into the metal center of the hydrogenase. This chain is Hydrogenase maturation factor HypA, found in Caldanaerobacter subterraneus subsp. tengcongensis (strain DSM 15242 / JCM 11007 / NBRC 100824 / MB4) (Thermoanaerobacter tengcongensis).